A 393-amino-acid polypeptide reads, in one-letter code: Probable RNA methyltransferase sce3898 (393 aa).

Catalysis depends on glutamate 82, which acts as the Proton acceptor. Residues 90–329 form the Radical SAM core domain; sequence RPGRYSACVS…VRSARLDAFR (240 aa). Cysteine 97 and cysteine 353 are disulfide-bonded. Cysteine 104, cysteine 108, and cysteine 111 together coordinate [4Fe-4S] cluster. Residues 157 to 158, 212 to 214, and asparagine 294 each bind S-adenosyl-L-methionine; these read GE and SLG. Cysteine 353 serves as the catalytic S-methylcysteine intermediate. The tract at residues 357–393 is disordered; it reads ARPSAEAQRPGGRRAPPRPGATAGAADVGPSAPPRPA. The segment covering 373 to 382 has biased composition (low complexity); sequence PRPGATAGAA.

It belongs to the radical SAM superfamily. RlmN family. It depends on [4Fe-4S] cluster as a cofactor.

Its subcellular location is the cytoplasm. The sequence is that of Probable RNA methyltransferase sce3898 from Sorangium cellulosum (strain So ce56) (Polyangium cellulosum (strain So ce56)).